We begin with the raw amino-acid sequence, 307 residues long: Dihydroorotate dehydrogenase A (fumarate) (307 aa).

FMN is bound by residues Ser-21 and 46–47 (KT). Substrate-binding positions include Lys-46, 70 to 74 (NSVGL), and Asn-130. Asn-130 serves as a coordination point for FMN. Cys-133 (nucleophile) is an active-site residue. Residues Lys-168 and Ile-194 each coordinate FMN. 195 to 196 (NT) is a substrate binding site. Residues Gly-220, 246-247 (GG), and 268-269 (GS) contribute to the FMN site.

Belongs to the dihydroorotate dehydrogenase family. Type 1 subfamily. In terms of assembly, homodimer. Requires FMN as cofactor.

Its subcellular location is the cytoplasm. The catalysed reaction is (S)-dihydroorotate + fumarate = orotate + succinate. It functions in the pathway pyrimidine metabolism; UMP biosynthesis via de novo pathway. In terms of biological role, catalyzes the conversion of dihydroorotate to orotate with fumarate as the electron acceptor. In Lactobacillus delbrueckii subsp. bulgaricus (strain ATCC BAA-365 / Lb-18), this protein is Dihydroorotate dehydrogenase A (fumarate) (pyrD).